We begin with the raw amino-acid sequence, 409 residues long: MAIEIKAPTFPESVADGTVATWHKKPGEAVKRDELIVDIETDKVVIEVLAEADGVLAEIIKNEGDTVLSNELLGKLNEGGAAAPAAPAAAAPAAAPAAQAAAPAAAGGDDAILSPAARKLAEEAGIDPNSIAGTGKGGRVTKEDVVAAVEAKKNAPAAPAKPAAPAAEAPIFAAGDRVEKRVPMTRLRAKVAERLVEAQSAMAMLTTFNEVNMKPIMDLRSKYKDLFEKKHNGVRLGFMSFFVKAATEALKRFPGVNASIDGNDIVYHGYQDIGVAVSSDRGLVVPVLRNAEFMSLAEIEGGIANFGKKAKEGKLTIEDMTGGTFTISNGGVFGSLLSTPIVNPPQTAILGMHKIQERPMAVNGQVVILPMMYLALSYDHRLIDGKEAVSFLVAIKDLLEDPARLLLDV.

The Lipoyl-binding domain occupies 2 to 77 (AIEIKAPTFP…LSNELLGKLN (76 aa)). An N6-lipoyllysine modification is found at Lys-43. Residues 112 to 149 (ILSPAARKLAEEAGIDPNSIAGTGKGGRVTKEDVVAAV) form the Peripheral subunit-binding (PSBD) domain. Active-site residues include His-380 and Asp-384.

This sequence belongs to the 2-oxoacid dehydrogenase family. As to quaternary structure, forms a 24-polypeptide structural core with octahedral symmetry. Part of the 2-oxoglutarate dehydrogenase (OGDH) complex composed of E1 (2-oxoglutarate dehydrogenase), E2 (dihydrolipoamide succinyltransferase) and E3 (dihydrolipoamide dehydrogenase); the complex contains multiple copies of the three enzymatic components (E1, E2 and E3). Requires (R)-lipoate as cofactor.

The catalysed reaction is N(6)-[(R)-dihydrolipoyl]-L-lysyl-[protein] + succinyl-CoA = N(6)-[(R)-S(8)-succinyldihydrolipoyl]-L-lysyl-[protein] + CoA. It participates in amino-acid degradation; L-lysine degradation via saccharopine pathway; glutaryl-CoA from L-lysine: step 6/6. Its function is as follows. E2 component of the 2-oxoglutarate dehydrogenase (OGDH) complex which catalyzes the second step in the conversion of 2-oxoglutarate to succinyl-CoA and CO(2). This Pseudomonas aeruginosa (strain ATCC 15692 / DSM 22644 / CIP 104116 / JCM 14847 / LMG 12228 / 1C / PRS 101 / PAO1) protein is Dihydrolipoyllysine-residue succinyltransferase component of 2-oxoglutarate dehydrogenase complex (sucB).